A 151-amino-acid polypeptide reads, in one-letter code: SsrA-binding protein (151 aa).

This sequence belongs to the SmpB family.

The protein localises to the cytoplasm. In terms of biological role, required for rescue of stalled ribosomes mediated by trans-translation. Binds to transfer-messenger RNA (tmRNA), required for stable association of tmRNA with ribosomes. tmRNA and SmpB together mimic tRNA shape, replacing the anticodon stem-loop with SmpB. tmRNA is encoded by the ssrA gene; the 2 termini fold to resemble tRNA(Ala) and it encodes a 'tag peptide', a short internal open reading frame. During trans-translation Ala-aminoacylated tmRNA acts like a tRNA, entering the A-site of stalled ribosomes, displacing the stalled mRNA. The ribosome then switches to translate the ORF on the tmRNA; the nascent peptide is terminated with the 'tag peptide' encoded by the tmRNA and targeted for degradation. The ribosome is freed to recommence translation, which seems to be the essential function of trans-translation. The chain is SsrA-binding protein from Wolinella succinogenes (strain ATCC 29543 / DSM 1740 / CCUG 13145 / JCM 31913 / LMG 7466 / NCTC 11488 / FDC 602W) (Vibrio succinogenes).